The chain runs to 258 residues: Indole-3-glycerol phosphate synthase (258 aa).

It belongs to the TrpC family.

It catalyses the reaction 1-(2-carboxyphenylamino)-1-deoxy-D-ribulose 5-phosphate + H(+) = (1S,2R)-1-C-(indol-3-yl)glycerol 3-phosphate + CO2 + H2O. Its pathway is amino-acid biosynthesis; L-tryptophan biosynthesis; L-tryptophan from chorismate: step 4/5. This chain is Indole-3-glycerol phosphate synthase, found in Geobacillus kaustophilus (strain HTA426).